We begin with the raw amino-acid sequence, 253 residues long: Redox-sensing transcriptional repressor Rex (253 aa).

Residues 26–65 constitute a DNA-binding region (H-T-H motif); the sequence is LYLRALTALSERSVPTVSSEELATAAGVNSAKLRKDFSYL. NAD(+) is bound at residue 100–105; that stretch reads GIGNLG. Positions 217-253 are disordered; the sequence is RKAGEDSAAEDEGAPPMRATPASRKGPDGDMPAVMPA.

The protein belongs to the transcriptional regulatory Rex family. Homodimer.

It is found in the cytoplasm. Modulates transcription in response to changes in cellular NADH/NAD(+) redox state. This Streptomyces griseus subsp. griseus (strain JCM 4626 / CBS 651.72 / NBRC 13350 / KCC S-0626 / ISP 5235) protein is Redox-sensing transcriptional repressor Rex.